Consider the following 385-residue polypeptide: 3-hydroxyisobutyryl-CoA hydrolase, mitochondrial (385 aa).

Positions 120, 145, 168, and 176 each coordinate substrate.

This sequence belongs to the enoyl-CoA hydratase/isomerase family.

The protein localises to the mitochondrion. It catalyses the reaction 3-hydroxy-2-methylpropanoyl-CoA + H2O = 3-hydroxy-2-methylpropanoate + CoA + H(+). Its pathway is amino-acid degradation; L-valine degradation. In terms of biological role, hydrolyzes 3-hydroxyisobutyryl-CoA (HIBYL-CoA), a saline catabolite. Has high activity toward isobutyryl-CoA. Could be an isobutyryl-CoA dehydrogenase that functions in valine catabolism. Also hydrolyzes 3-hydroxypropanoyl-CoA. The protein is 3-hydroxyisobutyryl-CoA hydrolase, mitochondrial (hibch) of Xenopus laevis (African clawed frog).